Here is an 88-residue protein sequence, read N- to C-terminus: uncharacterized protein (88 aa).

A disordered region spans residues 1 to 54 (AVDAYDDDDNLKNEEGDYYNESDDGYSGDEEEEEKQEEDEQDDDDLQFDDGVPE). The span at 16-53 (GDYYNESDDGYSGDEEEEEKQEEDEQDDDDLQFDDGVP) shows a compositional bias: acidic residues.

Predominantly in developing fruit.

This is an uncharacterized protein from Fragaria ananassa (Strawberry).